A 620-amino-acid chain; its full sequence is Translation initiation factor IF-2 (620 aa).

In terms of domain architecture, tr-type G spans E119–L288. The tract at residues G128–T135 is G1. G128 to T135 provides a ligand contact to GTP. The segment at G153–A157 is G2. Residues D175–G178 are G3. Residues D175–H179 and N229–D232 contribute to the GTP site. The G4 stretch occupies residues N229–D232. The interval S265 to I267 is G5.

It belongs to the TRAFAC class translation factor GTPase superfamily. Classic translation factor GTPase family. IF-2 subfamily.

The protein resides in the cytoplasm. Functionally, one of the essential components for the initiation of protein synthesis. Protects formylmethionyl-tRNA from spontaneous hydrolysis and promotes its binding to the 30S ribosomal subunits. Also involved in the hydrolysis of GTP during the formation of the 70S ribosomal complex. In Mycoplasma capricolum subsp. capricolum (strain California kid / ATCC 27343 / NCTC 10154), this protein is Translation initiation factor IF-2.